The sequence spans 63 residues: Transmembrane protein 033R (63 aa).

This is Transmembrane protein 033R from Dryophytes versicolor (chameleon treefrog).